The sequence spans 337 residues: 2-oxoglutarate receptor 1 (337 aa).

At 1–34 (MNEPLDYLANASDFPDYAAAFGNCTDENIPLKMH) the chain is on the extracellular side. Residues Asn10 and Asn23 are each glycosylated (N-linked (GlcNAc...) asparagine). A helical transmembrane segment spans residues 35–55 (YLPVIYGIIFLVGFPGNAVVI). Topologically, residues 56 to 69 (STYIFKMRPWKSST) are cytoplasmic. Residues 70–90 (IIMLNLACTDLLYLTSLPFLI) traverse the membrane as a helical segment. Over 91–116 (HYYASGENWIFGDFMCKFIRFSFHFN) the chain is Extracellular. Residues Cys106 and Cys183 are joined by a disulfide bond. A helical membrane pass occupies residues 117-137 (LYSSILFLTCFSIFRYCVIIH). Residues 138 to 151 (PMSCFSIHKTRCAV) are Cytoplasmic-facing. A helical transmembrane segment spans residues 152–172 (VACAVVWIISLVAVIPMTFLI). Over 173-201 (TSTNRTNRSACLDLTSSDELNTIKWYNLI) the chain is Extracellular. Residues Asn176 and Asn179 are each glycosylated (N-linked (GlcNAc...) asparagine). A helical membrane pass occupies residues 202–222 (LTATTFCLPLVIVTLCYTTII). The Cytoplasmic portion of the chain corresponds to 223–242 (HTLTHGLQTDSCLKQKARRL). A helical transmembrane segment spans residues 243 to 263 (TILLLLAFYVCFLPFHILRVI). Residues 264–284 (RIESRLLSISCSIENQIHEAY) lie on the Extracellular side of the membrane. A helical membrane pass occupies residues 285–305 (IVSRPLAALNTFGNLLLYVVV). Residues 306-337 (SDNFQQAVCSTVRCKVSGNLEQAKKISYSNNP) are Cytoplasmic-facing.

It belongs to the G-protein coupled receptor 1 family. In terms of tissue distribution, detected in kidney and, to a lower extent, in placenta. Not detected in brain tissues including the frontal cortex, caudate putamen, thalamus, hypothalamus, hippocampus or pons.

The protein resides in the cell membrane. G protein-coupled receptor for dicarboxylates and amino dicarboxylates. Receptor for itaconate, a metabolite produced by myeloid lineages. In the respiratory epithelium, couples the binding of itaconate to the activation of GNA11 and downstream intracellular Ca(2+) release, leading to mucocilliary clearance of airborne pathogens. Receptor for leukotriene E4 (LTE4) produced by mast cells upon allergic inflammation. Binds with high affinity to LTE4 and elicits mucin release from pulmonary epithelium in response to airborne fungi allergens. Regulates mucin-producing goblet cell homeostasis. Receptor for alpha-ketoglutarate produced by proximal tubule renal cells upon metabolic alkalosis. In an intrarenal paracrine signaling pathway, binds alpha-ketoglutarate and drives transepithelial salt reabsorption and bicarbonate secretion by SLC26A4/pendrin-positive intercalated cells. The polypeptide is 2-oxoglutarate receptor 1 (OXGR1) (Homo sapiens (Human)).